Consider the following 550-residue polypeptide: Solute carrier family 22 member 6 (550 aa).

Topologically, residues 1–9 (MAFNDLLQQ) are cytoplasmic. The chain crosses the membrane as a helical span at residues 10-30 (VGGVGRFQQIQVTLVVLPLLL). Residues 31-135 (MASHNTLQNF…LVCSHRALRQ (105 aa)) lie on the Extracellular side of the membrane. Residues Asn-39, Asn-92, and Asn-113 are each glycosylated (N-linked (GlcNAc...) asparagine). Residues 136–156 (LAQSLYMVGVLLGAMVFGYLA) form a helical membrane-spanning segment. Topologically, residues 157 to 164 (DRLGRRKV) are cytoplasmic. A helical transmembrane segment spans residues 165 to 187 (LILNYLQTAVSGTCTAFAPNFSI). The Extracellular segment spans residues 188 to 195 (YCAFRLLS). Residues 196–216 (GMSLAGISLNCMTLNVEWMPI) traverse the membrane as a helical segment. The Cytoplasmic portion of the chain corresponds to 217-224 (HTRACVGT). The helical transmembrane segment at 225–245 (LIGYVYSLGQFLLAGVAYAVP) threads the bilayer. Topologically, residues 246 to 248 (HWR) are extracellular. A helical transmembrane segment spans residues 249 to 269 (HLQLLVSAPFFAFFIYSWFFI). Residues 270 to 337 (ESARWHSSSG…ELLRCPTLRH (68 aa)) lie on the Cytoplasmic side of the membrane. The chain crosses the membrane as a helical span at residues 338–358 (LFLCLSMLWFATSFAYYGLVM). Residues 359–368 (DLQGFGVSIY) lie on the Extracellular side of the membrane. A helical membrane pass occupies residues 369–389 (LIQVIFGAVDLPAKLVGFLVI). Residues 390 to 395 (NSLGRR) lie on the Cytoplasmic side of the membrane. Residues 396–416 (PAQMAALLLAGICILLNGVIP) form a helical membrane-spanning segment. Residues 417–420 (QDQS) are Extracellular-facing. Residues 421 to 444 (IVRTSLAVPGKGCLAASFNCIFLY) form a helical membrane-spanning segment. The Cytoplasmic portion of the chain corresponds to 445–455 (TGELYPTMIRQ). The chain crosses the membrane as a helical span at residues 456 to 475 (TGMGMGSTMARVGSIVSPLV). Residues 476–484 (SMTAELYPS) lie on the Extracellular side of the membrane. The chain crosses the membrane as a helical span at residues 485–505 (MPLFIYGAVPVAASAVTVLLP). The Cytoplasmic portion of the chain corresponds to 506–550 (ETLGQPLPDTVQDLESRKGKQTRQQQEHQKYMVPLQASAQEKNGL). The interval 514–550 (DTVQDLESRKGKQTRQQQEHQKYMVPLQASAQEKNGL) is disordered.

The protein belongs to the major facilitator (TC 2.A.1) superfamily. Organic cation transporter (TC 2.A.1.19) family. In terms of processing, glycosylated. Glycosylation is necessary for proper targeting of the transporter to the plasma membrane.

Its subcellular location is the cell membrane. The enzyme catalyses prostaglandin F2alpha(out) = prostaglandin F2alpha(in). It catalyses the reaction prostaglandin E2(out) = prostaglandin E2(in). Involved in the renal elimination of endogenous and exogenous organic anions. Functions as organic anion exchanger when the uptake of one molecule of organic anion is coupled with an efflux of one molecule of endogenous dicarboxylic acid (glutarate, ketoglutarate, etc). Mediates the transport of prostaglandin E2 (PGE2) and prostaglandin F2-alpha (PGF2-alpha) and may be involved in their renal excretion. Also mediates the sodium-independent uptake of p-aminohippurate (PAH), 2,3-dimercapto-1-propanesulfonic acid (DMPS), cidofovir, adefovir, 9-(2-phosphonylmethoxyethyl) guanine (PMEG), 9-(2-phosphonylmethoxyethyl) diaminopurine (PMEDAP), ochratoxin (OTA), acyclovir (ACV), 3'-azido-3-'deoxythymidine (AZT), cimetidine (CMD), 2,4-dichloro-phenoxyacetate (2,4-D), hippurate (HA), indoleacetate (IA), indoxyl sulfate (IS) and 3-carboxy-4-methyl-5-propyl-2-furanpropionate (CMPF) and edaravone sulfate. PAH uptake is inhibited by p-chloromercuribenzenesulphonate (PCMBS), diethyl pyrocarbonate (DEPC), indomethacin, sulindac, diclofenac, carprofen, okadaic acid, benzothiazolylcysteine (BTC), S-chlorotrifluoroethylcysteine (CTFC), cysteine S-conjugates S-dichlorovinylcysteine (DCVC), furosemide, steviol, phorbol 12-myristate 13-acetate (PMA), calcium ionophore A23187, benzylpenicillin, bumetamide, losartan, probenecid, phenol red, urate, glutarate and alpha-ketoglutarate. The polypeptide is Solute carrier family 22 member 6 (SLC22A6) (Pongo abelii (Sumatran orangutan)).